A 527-amino-acid chain; its full sequence is MNGDLNSWDKFCNYLWFDNKLNIWLDISKISFTRKEIDNLEEKFIDVFSSINELENGAISNIDENRQVGHYWLRNPSISPSSKIEEEICADINEISEFGKQILNGDIKNKNNQKYTDVLWIGIGGSGLGPILITDSLQKSSRGLNFSYIDNVDPFLISERLEELSEKLSTTLFVVVSKSGGTPEPRIAMEIIKSHCENNSLEWNSNAIAITMKDSKLFKKATSENWLKIFNLQDWVGGRTSITSSVGLLPLALINENIFEFIRGASLMDEATRTVDFKNNPAALLSSAWYLTGDGIGKRDMVVLPYRDRLQVFSKYLQQLVMESLGKKFNRKGEVVNQGISVFGNKGSTDQHAYVQQLRDGIDNFFCIFIELLDSPSTSIFDKKENPKEYLSGFLQGTRSALSSENRQSITITLEKLNCFSLGALIALFERAVSFYAELVNINAYDQPGVEAGKKAAANIIEYQQKVRNLLDEGGEYSINDITSLFDNSVSEPIFFILREMCFGNDNYLVKGDWSNPNSLVIQKINS.

The active-site Proton donor is glutamate 323. Catalysis depends on residues histidine 352 and lysine 454.

Belongs to the GPI family.

Its subcellular location is the cytoplasm. It catalyses the reaction alpha-D-glucose 6-phosphate = beta-D-fructose 6-phosphate. The protein operates within carbohydrate biosynthesis; gluconeogenesis. Its pathway is carbohydrate degradation; glycolysis; D-glyceraldehyde 3-phosphate and glycerone phosphate from D-glucose: step 2/4. Its function is as follows. Catalyzes the reversible isomerization of glucose-6-phosphate to fructose-6-phosphate. This is Glucose-6-phosphate isomerase from Prochlorococcus marinus (strain MIT 9215).